The chain runs to 233 residues: MCRHLGWLGAQVAVSSLVLDPPQGLRVQSYAPRRQKHGLMNADGWGVGFFDGAIPRRWRSAAPLWGDTSFHSVAPALRSHCILAAVRSATVGMPIEVSATPPFTDGHWLLAHNGVVDRAVLPAGPAAESVCDSAILAATIFAHGLDALGDTIVKVGAADPNARLNILAANGSRLIATTWGDTLSILRRADGVVLASEPYDDDSGWGDVPDRHLVEVTQKGVTLTALDRAKGPR.

Residue cysteine 2 is the Nucleophile of the active site. In terms of domain architecture, Glutamine amidotransferase type-2 spans 2–233 (CRHLGWLGAQ…TALDRAKGPR (232 aa)).

It carries out the reaction gamma-L-glutamyl-hercynylcysteine S-oxide + H2O = S-(hercyn-2-yl)-L-cysteine S-oxide + L-glutamate. Its pathway is amino-acid biosynthesis; ergothioneine biosynthesis. Functionally, catalyzes the hydrolysis of the gamma-glutamyl amide bond of hercynyl-gamma-L-glutamyl-L-cysteine sulfoxide to produce hercynylcysteine sulfoxide, a step in the biosynthesis pathway of ergothioneine. ERG is one of the major redox buffers which protects bacteria against redox stressors and antibiotics; loss of ERG or mycothiol (MSH, the other major redox buffer in this bacteria) leads to respiratory alterations and bioenergetic deficiencies that negatively impact virulence. This chain is Gamma-glutamyl-hercynylcysteine sulfoxide hydrolase, found in Mycobacterium tuberculosis (strain CDC 1551 / Oshkosh).